A 427-amino-acid chain; its full sequence is Interleukin-13 receptor subunit alpha-1 (427 aa).

Positions 1–21 (MEWPARLCGLWALLLCAGGGG) are cleaved as a signal peptide. At 22–343 (GGGGAAPTET…MSIGKKRNST (322 aa)) the chain is on the extracellular side. Fibronectin type-III domains are found at residues 34 to 123 (PVTN…PPEG), 128 to 226 (AVTE…TSRV), and 227 to 339 (KPDP…IGKK). Residues Asn-37 and Asn-61 are each glycosylated (N-linked (GlcNAc...) asparagine). Cystine bridges form between Cys-62–Cys-102, Cys-95–Cys-117, and Cys-134–Cys-144. N-linked (GlcNAc...) asparagine glycans are attached at residues Asn-105, Asn-138, and Asn-157. An intrachain disulfide couples Cys-173 to Cys-185. Residues Asn-235, Asn-265, Asn-293, Asn-329, and Asn-341 are each glycosylated (N-linked (GlcNAc...) asparagine). 2 disulfides stabilise this stretch: Cys-257–Cys-320 and Cys-282–Cys-296. Positions 327–331 (WSNWS) match the WSXWS motif motif. A helical transmembrane segment spans residues 344–367 (LYITMLLIVPVIVAGAIIVLLLYL). Residues 368–427 (KRLKIIIFPPIPDPGKIFKEMFGDQNDDTLHWKKYDIYEKQTKEETDSVVLIENLKKASQ) are Cytoplasmic-facing. A Box 1 motif motif is present at residues 374–382 (IFPPIPDPG).

The protein belongs to the type I cytokine receptor family. Type 5 subfamily. Interleukin-13 receptor is a complex of IL4R, IL13RA1, and possibly other components. Interacts with TRAF3IP1. Interacts with IL4. In terms of tissue distribution, ubiquitous. Highest levels in heart, liver, skeletal muscle and ovary; lowest levels in brain, lung and kidney. Also found in B-cells, T-cells and endothelial cells.

It localises to the membrane. Functionally, binds with low affinity to interleukin-13 (IL13). Together with IL4RA can form a functional receptor for IL13. Also serves as an alternate accessory protein to the common cytokine receptor gamma chain for interleukin-4 (IL4) signaling, but cannot replace the function of IL2RG in allowing enhanced interleukin-2 (IL2) binding activity. The protein is Interleukin-13 receptor subunit alpha-1 (IL13RA1) of Homo sapiens (Human).